The chain runs to 812 residues: ISWI one complex protein 2 (812 aa).

Disordered regions lie at residues 1-21 (MRTKRTRGTRNVGASMPAGAA), 614-646 (MGNSHGNRRSSRRPQSTLEPSTKSSRPTDKRKP), 679-704 (AKQRKQQEDRERRKKMKEEKKRLEEL), and 762-812 (QTGS…PPTN). Positions 627-638 (PQSTLEPSTKSS) are enriched in polar residues. The stretch at 673–714 (ELKIIRAKQRKQQEDRERRKKMKEEKKRLEELAKKRELTESV) forms a coiled coil. Positions 683 to 704 (KQQEDRERRKKMKEEKKRLEEL) are enriched in basic and acidic residues. Over residues 769 to 796 (PQAPQAPQTSQASIQPQQQQQQQQQQQP) the composition is skewed to low complexity.

Component of the ISW1B complex, which at least consists of ISW1, IOC2 and IOC4.

It localises to the nucleus. In terms of biological role, functions as a component of the ISW1B complex, which acts in remodeling the chromatin by catalyzing an ATP-dependent alteration in the structure of nucleosomal DNA. The ISW1B complex acts within coding regions to control the amount of RNA polymerase II released into productive elongation and to coordinate elongation with termination and pre-mRNA processing. The chain is ISWI one complex protein 2 (IOC2) from Saccharomyces cerevisiae (strain ATCC 204508 / S288c) (Baker's yeast).